Reading from the N-terminus, the 230-residue chain is 5'-methylthioadenosine/S-adenosylhomocysteine nucleosidase (230 aa).

Glutamate 12 functions as the Proton acceptor in the catalytic mechanism. Residues glycine 78, isoleucine 153, and 174 to 175 each bind substrate; that span reads ME. Aspartate 198 acts as the Proton donor in catalysis.

Belongs to the PNP/UDP phosphorylase family. MtnN subfamily.

The catalysed reaction is S-adenosyl-L-homocysteine + H2O = S-(5-deoxy-D-ribos-5-yl)-L-homocysteine + adenine. It catalyses the reaction S-methyl-5'-thioadenosine + H2O = 5-(methylsulfanyl)-D-ribose + adenine. It carries out the reaction 5'-deoxyadenosine + H2O = 5-deoxy-D-ribose + adenine. It functions in the pathway amino-acid biosynthesis; L-methionine biosynthesis via salvage pathway; S-methyl-5-thio-alpha-D-ribose 1-phosphate from S-methyl-5'-thioadenosine (hydrolase route): step 1/2. Catalyzes the irreversible cleavage of the glycosidic bond in both 5'-methylthioadenosine (MTA) and S-adenosylhomocysteine (SAH/AdoHcy) to adenine and the corresponding thioribose, 5'-methylthioribose and S-ribosylhomocysteine, respectively. Also cleaves 5'-deoxyadenosine, a toxic by-product of radical S-adenosylmethionine (SAM) enzymes, into 5-deoxyribose and adenine. The protein is 5'-methylthioadenosine/S-adenosylhomocysteine nucleosidase of Shewanella denitrificans (strain OS217 / ATCC BAA-1090 / DSM 15013).